A 129-amino-acid chain; its full sequence is Replication initiation control protein YabA (129 aa).

The Zn(2+) site is built by histidine 103, cysteine 105, cysteine 119, and cysteine 122.

This sequence belongs to the YabA family. Homotetramer. Interacts with both DnaA and DnaN, acting as a bridge between these two proteins. The cofactor is Zn(2+).

It localises to the cytoplasm. The protein resides in the nucleoid. Involved in control of chromosome replication initiation. Inhibits the cooperative binding of DnaA to the oriC region, thus negatively regulating initiation of chromosome replication. Inhibits the ability of DnaA-ATP to form a helix on DNA; does not disassemble preformed DnaA-DNA helices. Decreases the residence time of DnaA on the chromosome at its binding sites (oriC, replication forks and promoter-binding sites). Tethers DnaA to the replication machinery via the DNA polymerase beta sliding clamp subunit (dnaN). Associates with oriC and other DnaA targets on the chromosome in a DnaA-dependent manner. This chain is Replication initiation control protein YabA, found in Listeria innocua serovar 6a (strain ATCC BAA-680 / CLIP 11262).